Consider the following 678-residue polypeptide: NADPH--cytochrome P450 reductase (678 aa).

Position 2 is an N-acetylglycine (glycine 2). Residues 2–21 (GDSHVDTGATSTEAVAEEVS) lie on the Lumenal side of the membrane. The helical transmembrane segment at 22-42 (LFSMTDMILLSVLVGFLTYFF) threads the bilayer. Topologically, residues 43 to 678 (LFRKKKEEIP…KGRYSLDVWS (636 aa)) are cytoplasmic. A Phosphoserine modification is found at serine 63. Residues 80–224 (IIVFYGSQTG…DFITWREQFW (145 aa)) form the Flavodoxin-like domain. FMN is bound by residues 86 to 91 (SQTGTA), 138 to 141 (ATYG), 173 to 182 (LGNKTYEHFN), and aspartate 208. The FAD-binding FR-type domain maps to 279–521 (KNPFLAAVTT…FVRKSQFRLP (243 aa)). Arginine 298 lines the NADP(+) pocket. FAD-binding positions include arginine 424, 454-457 (RYYS), 472-474 (CAV), tyrosine 478, and 488-491 (GVAT). NADP(+) is bound by residues threonine 535, 596-597 (SR), 602-606 (KVYVQ), and aspartate 639. Tryptophan 677 serves as a coordination point for FAD.

It belongs to the NADPH--cytochrome P450 reductase family. The protein in the N-terminal section; belongs to the flavodoxin family. In the C-terminal section; belongs to the flavoprotein pyridine nucleotide cytochrome reductase family. Requires FAD as cofactor. FMN serves as cofactor.

It is found in the endoplasmic reticulum membrane. It catalyses the reaction 2 oxidized [cytochrome P450] + NADPH = 2 reduced [cytochrome P450] + NADP(+) + H(+). Its function is as follows. This enzyme is required for electron transfer from NADP to cytochrome P450 in microsomes. It can also provide electron transfer to heme oxygenase and cytochrome B5. The protein is NADPH--cytochrome P450 reductase of Cavia porcellus (Guinea pig).